The chain runs to 156 residues: Ribosome maturation factor RimP (156 aa).

It belongs to the RimP family.

Its subcellular location is the cytoplasm. In terms of biological role, required for maturation of 30S ribosomal subunits. The protein is Ribosome maturation factor RimP of Halalkalibacterium halodurans (strain ATCC BAA-125 / DSM 18197 / FERM 7344 / JCM 9153 / C-125) (Bacillus halodurans).